We begin with the raw amino-acid sequence, 316 residues long: MINMDISVTPNYSYIFDFENDFIHQRTRKWMLENWTWVFYYCGIYMLVIFGGQHFMQNRPRFQLRGPLIIWNTLLAMFSIMGAARTAPELIHVLRHYGLFHSVCVPSYIEQDRVCGFWTWLFVLSKLPELGDTIFIVLRKQPLIFLHWYHHITVLIYSWFSYTEYTSSARWFIVMNYCVHSVMYSYYALKAARFNPPRFISMIITSLQLAQMIIGCAINVWANGFLKTHGTSSCHISQRNINLSIAMYSSYFVLFARFFYKAYLAPGGHKSRRMAASLAAQNVVKQSSSPQQASESSKFIGAGEDQAAYLRKAKAQ.

Asn11 carries an N-linked (GlcNAc...) asparagine glycan. The next 6 membrane-spanning stretches (helical) occupy residues 30-50 (WMLE…LVIF), 64-84 (LRGP…MGAA), 117-137 (FWTW…IFIV), 142-162 (PLIF…WFSY), 167-189 (SSAR…YYAL), and 202-222 (MIIT…NVWA). Asn242 carries an N-linked (GlcNAc...) asparagine glycan. Residues 245–265 (IAMYSSYFVLFARFFYKAYLA) traverse the membrane as a helical segment.

The protein belongs to the ELO family. ELOVL6 subfamily. In terms of tissue distribution, detected in the CNS (central nervous system) of third larval instar (at protein level). Expressed in cyst progenitor cells (at protein level). In the adult fly, expressed in several tissues including, sperm, follicular epithelium, nurse cells and cyst cells.

The protein resides in the mitochondrion outer membrane. It localises to the endoplasmic reticulum membrane. The enzyme catalyses a very-long-chain acyl-CoA + malonyl-CoA + H(+) = a very-long-chain 3-oxoacyl-CoA + CO2 + CoA. The catalysed reaction is hexadecanoyl-CoA + malonyl-CoA + H(+) = 3-oxooctadecanoyl-CoA + CO2 + CoA. Its pathway is lipid metabolism; fatty acid biosynthesis. Its function is as follows. Catalyzes the first and rate-limiting reaction of the four reactions that constitute the long-chain fatty acids elongation cycle. This process allows the addition of 2 carbons to the chain of long- and very long-chain fatty acids (VLCFAs) per cycle. Condensing enzyme that elongates fatty acids with 12, 14 and 16 carbons with higher activity toward C16:0 acyl-CoAs. Catalyzes the synthesis of unsaturated C16 long chain fatty acids and, to a lesser extent, C18:0 and those with low desaturation degree. May participate in the production of saturated and monounsaturated VLCFAs of different chain lengths that are involved in multiple biological processes as precursors of membrane lipids and lipid mediators. The sequence is that of Very long chain fatty acid elongase 6 from Drosophila melanogaster (Fruit fly).